Reading from the N-terminus, the 369-residue chain is Protein pxr-1 (369 aa).

Positions 1 to 23 are disordered; that stretch reads MGLAAAKNKRKLGTDPNNTKWSR. The 55-residue stretch at 25 to 79 folds into the G-patch domain; it reads ETTFGQKILRAQGWQPGEFLGAKDAAHAVHHTEASSSHIKVTLKDDNLGLGAKRN. A disordered region spans residues 147–338; it reads EEDGVPQSDT…GTSTPTVTSS (192 aa). The segment covering 153-167 has biased composition (polar residues); it reads QSDTVDQQVETVPSQ. Positions 218–227 are enriched in basic residues; sequence SKKKEKKDKK. The segment covering 228–237 has biased composition (basic and acidic residues); that stretch reads EKKDQKEKKD. Over residues 267-292 the composition is skewed to basic residues; it reads KSKKDKKKEKKEKKDKKKDKKEKKRK. Over residues 304–318 the composition is skewed to basic and acidic residues; that stretch reads EDSKSKAQKRTKDGA. The segment covering 322–338 has biased composition (low complexity); that stretch reads TSTPGGSGTSTPTVTSS.

It belongs to the PINX1 family.

The protein localises to the nucleus. The protein resides in the nucleolus. In terms of biological role, involved in rRNA-processing at A0, A1 and A2 sites and negatively regulates telomerase. The sequence is that of Protein pxr-1 (pxr-1) from Neurospora crassa (strain ATCC 24698 / 74-OR23-1A / CBS 708.71 / DSM 1257 / FGSC 987).